A 165-amino-acid chain; its full sequence is MRIGHGFDVHKFGGEGPLVIGGVRIPYTQGLLAHSDGDVVLHAVTDALLGAAALGDIGKLFPDTDPAFKGADSRGLLREAWRRINDKGYQLGNLDVTIIAQAPKMAPHIPQMRVNLAEDLQCHMDDVNVKATTTEQLGFTGRGEGIACEAVALLVKKETGEIVAW.

2 residues coordinate a divalent metal cation: aspartate 8 and histidine 10. Residues 8–10 (DVH) and 34–35 (HS) contribute to the 4-CDP-2-C-methyl-D-erythritol 2-phosphate site. Histidine 42 contributes to the a divalent metal cation binding site. Residues 56–58 (DIG), 61–65 (FPDTD), 100–106 (AQAPKMA), 132–135 (TTTE), phenylalanine 139, and arginine 142 contribute to the 4-CDP-2-C-methyl-D-erythritol 2-phosphate site.

The protein belongs to the IspF family. As to quaternary structure, homotrimer. Requires a divalent metal cation as cofactor.

It carries out the reaction 4-CDP-2-C-methyl-D-erythritol 2-phosphate = 2-C-methyl-D-erythritol 2,4-cyclic diphosphate + CMP. The protein operates within isoprenoid biosynthesis; isopentenyl diphosphate biosynthesis via DXP pathway; isopentenyl diphosphate from 1-deoxy-D-xylulose 5-phosphate: step 4/6. Functionally, involved in the biosynthesis of isopentenyl diphosphate (IPP) and dimethylallyl diphosphate (DMAPP), two major building blocks of isoprenoid compounds. Catalyzes the conversion of 4-diphosphocytidyl-2-C-methyl-D-erythritol 2-phosphate (CDP-ME2P) to 2-C-methyl-D-erythritol 2,4-cyclodiphosphate (ME-CPP) with a corresponding release of cytidine 5-monophosphate (CMP). The chain is 2-C-methyl-D-erythritol 2,4-cyclodiphosphate synthase from Pectobacterium atrosepticum (strain SCRI 1043 / ATCC BAA-672) (Erwinia carotovora subsp. atroseptica).